The following is a 98-amino-acid chain: Putative septation protein SpoVG (98 aa).

The protein belongs to the SpoVG family.

In terms of biological role, essential for sporulation. Interferes with or is a negative regulator of the pathway leading to asymmetric septation. This chain is Putative septation protein SpoVG, found in Shouchella clausii (strain KSM-K16) (Alkalihalobacillus clausii).